Consider the following 513-residue polypeptide: Light-independent protochlorophyllide reductase subunit B (513 aa).

Asp36 contacts [4Fe-4S] cluster. The active-site Proton donor is Asp299. Residue 434-435 (GM) coordinates substrate.

This sequence belongs to the ChlB/BchB/BchZ family. Protochlorophyllide reductase is composed of three subunits; ChlL, ChlN and ChlB. Forms a heterotetramer of two ChlB and two ChlN subunits. [4Fe-4S] cluster serves as cofactor.

The protein resides in the plastid. It localises to the chloroplast. It carries out the reaction chlorophyllide a + oxidized 2[4Fe-4S]-[ferredoxin] + 2 ADP + 2 phosphate = protochlorophyllide a + reduced 2[4Fe-4S]-[ferredoxin] + 2 ATP + 2 H2O. It functions in the pathway porphyrin-containing compound metabolism; chlorophyll biosynthesis (light-independent). Functionally, component of the dark-operative protochlorophyllide reductase (DPOR) that uses Mg-ATP and reduced ferredoxin to reduce ring D of protochlorophyllide (Pchlide) to form chlorophyllide a (Chlide). This reaction is light-independent. The NB-protein (ChlN-ChlB) is the catalytic component of the complex. The protein is Light-independent protochlorophyllide reductase subunit B of Marchantia polymorpha (Common liverwort).